Reading from the N-terminus, the 286-residue chain is 33 kDa chaperonin (286 aa).

2 disulfides stabilise this stretch: cysteine 225-cysteine 227 and cysteine 258-cysteine 261.

The protein belongs to the HSP33 family. Under oxidizing conditions two disulfide bonds are formed involving the reactive cysteines. Under reducing conditions zinc is bound to the reactive cysteines and the protein is inactive.

It localises to the cytoplasm. Functionally, redox regulated molecular chaperone. Protects both thermally unfolding and oxidatively damaged proteins from irreversible aggregation. Plays an important role in the bacterial defense system toward oxidative stress. This Shewanella loihica (strain ATCC BAA-1088 / PV-4) protein is 33 kDa chaperonin.